A 504-amino-acid polypeptide reads, in one-letter code: Maturase K (504 aa).

This sequence belongs to the intron maturase 2 family. MatK subfamily.

It localises to the plastid. The protein localises to the chloroplast. Usually encoded in the trnK tRNA gene intron. Probably assists in splicing its own and other chloroplast group II introns. The chain is Maturase K from Actinidia chinensis (Kiwi).